Consider the following 404-residue polypeptide: Argininosuccinate synthase (404 aa).

9–17 (AYSGGLDTS) contacts ATP. Tyr-86 contacts L-citrulline. Gly-116 contacts ATP. Residues Thr-118, Asn-122, and Asp-123 each coordinate L-aspartate. Asn-122 contacts L-citrulline. Residues Arg-126, Ser-174, Ser-183, Glu-259, and Tyr-271 each coordinate L-citrulline.

It belongs to the argininosuccinate synthase family. Type 1 subfamily. In terms of assembly, homotetramer.

It is found in the cytoplasm. It carries out the reaction L-citrulline + L-aspartate + ATP = 2-(N(omega)-L-arginino)succinate + AMP + diphosphate + H(+). It participates in amino-acid biosynthesis; L-arginine biosynthesis; L-arginine from L-ornithine and carbamoyl phosphate: step 2/3. The chain is Argininosuccinate synthase from Listeria monocytogenes serotype 4b (strain CLIP80459).